A 467-amino-acid polypeptide reads, in one-letter code: Glutamate--tRNA ligase (467 aa).

Positions 9–19 match the 'HIGH' region motif; that stretch reads PSPTGFLHIGG. A 'KMSKS' region motif is present at residues 241–245; it reads KLSKR. Position 244 (lysine 244) interacts with ATP.

Belongs to the class-I aminoacyl-tRNA synthetase family. Glutamate--tRNA ligase type 1 subfamily. As to quaternary structure, monomer.

It is found in the cytoplasm. The catalysed reaction is tRNA(Glu) + L-glutamate + ATP = L-glutamyl-tRNA(Glu) + AMP + diphosphate. In terms of biological role, catalyzes the attachment of glutamate to tRNA(Glu) in a two-step reaction: glutamate is first activated by ATP to form Glu-AMP and then transferred to the acceptor end of tRNA(Glu). This is Glutamate--tRNA ligase from Methylobacillus flagellatus (strain ATCC 51484 / DSM 6875 / VKM B-1610 / KT).